We begin with the raw amino-acid sequence, 294 residues long: NAD kinase (294 aa).

Residue D73 is the Proton acceptor of the active site. NAD(+) is bound by residues 73–74, 147–148, R175, D177, and 188–193; these read DG, ND, and TAYALS.

Belongs to the NAD kinase family. A divalent metal cation is required as a cofactor.

It localises to the cytoplasm. It catalyses the reaction NAD(+) + ATP = ADP + NADP(+) + H(+). Functionally, involved in the regulation of the intracellular balance of NAD and NADP, and is a key enzyme in the biosynthesis of NADP. Catalyzes specifically the phosphorylation on 2'-hydroxyl of the adenosine moiety of NAD to yield NADP. This is NAD kinase from Nitrosospira multiformis (strain ATCC 25196 / NCIMB 11849 / C 71).